A 91-amino-acid chain; its full sequence is Small integral membrane protein 12 (91 aa).

Residues 12 to 34 (YAPYVTFPVAFVVGAVGYHLEWF) form a helical membrane-spanning segment.

The protein belongs to the SMIM12 family.

Its subcellular location is the membrane. This is Small integral membrane protein 12 (smim12) from Danio rerio (Zebrafish).